The chain runs to 178 residues: MORN repeat-containing protein 5 (178 aa).

MORN repeat units lie at residues 8-30 (YDGD…THTR), 31-53 (YVGE…NGSK), and 54-75 (YEGT…DGLK).

Its subcellular location is the cell projection. The protein resides in the cilium. The protein localises to the flagellum. This chain is MORN repeat-containing protein 5 (morn5), found in Danio rerio (Zebrafish).